A 415-amino-acid chain; its full sequence is Imidazolonepropionase (415 aa).

Residues His80 and His82 each contribute to the Fe(3+) site. Positions 80 and 82 each coordinate Zn(2+). Residues Arg89, Tyr152, and His185 each coordinate 4-imidazolone-5-propanoate. Tyr152 contacts N-formimidoyl-L-glutamate. His250 contributes to the Fe(3+) binding site. His250 is a binding site for Zn(2+). Gln253 is a 4-imidazolone-5-propanoate binding site. Asp325 serves as a coordination point for Fe(3+). Residue Asp325 coordinates Zn(2+). The N-formimidoyl-L-glutamate site is built by Asn327 and Gly329. Thr330 provides a ligand contact to 4-imidazolone-5-propanoate.

Belongs to the metallo-dependent hydrolases superfamily. HutI family. It depends on Zn(2+) as a cofactor. Requires Fe(3+) as cofactor.

It localises to the cytoplasm. It carries out the reaction 4-imidazolone-5-propanoate + H2O = N-formimidoyl-L-glutamate. The protein operates within amino-acid degradation; L-histidine degradation into L-glutamate; N-formimidoyl-L-glutamate from L-histidine: step 3/3. Catalyzes the hydrolytic cleavage of the carbon-nitrogen bond in imidazolone-5-propanoate to yield N-formimidoyl-L-glutamate. It is the third step in the universal histidine degradation pathway. The sequence is that of Imidazolonepropionase from Rhizobium meliloti (strain 1021) (Ensifer meliloti).